A 126-amino-acid polypeptide reads, in one-letter code: Large ribosomal subunit protein bL20c (126 aa).

Belongs to the bacterial ribosomal protein bL20 family.

The protein resides in the plastid. It localises to the chloroplast. Binds directly to 23S ribosomal RNA and is necessary for the in vitro assembly process of the 50S ribosomal subunit. It is not involved in the protein synthesizing functions of that subunit. The protein is Large ribosomal subunit protein bL20c of Pelargonium hortorum (Common geranium).